The primary structure comprises 216 residues: Flavin-dependent thymidylate synthase (216 aa).

A ThyX domain is found at 9–206 (GFVELVDVMG…PWTYEAFIKY (198 aa)). Residues Ser55, 78–80 (RHR), and Glu86 each bind FAD. DUMP is bound by residues 75-78 (QWFR), 86-90 (ELSGR), and Arg145. Positions 78–88 (RHRIASYNELS) match the ThyX motif motif. Residues 161–163 (NAR) and Asn167 each bind FAD. A dUMP-binding site is contributed by Arg172. Arg172 functions as the Involved in ionization of N3 of dUMP, leading to its activation in the catalytic mechanism.

It belongs to the thymidylate synthase ThyX family. As to quaternary structure, homotetramer. FAD serves as cofactor.

The catalysed reaction is dUMP + (6R)-5,10-methylene-5,6,7,8-tetrahydrofolate + NADPH + H(+) = dTMP + (6S)-5,6,7,8-tetrahydrofolate + NADP(+). Its pathway is pyrimidine metabolism; dTTP biosynthesis. Functionally, catalyzes the reductive methylation of 2'-deoxyuridine-5'-monophosphate (dUMP) to 2'-deoxythymidine-5'-monophosphate (dTMP) while utilizing 5,10-methylenetetrahydrofolate (mTHF) as the methyl donor, and NADPH and FADH(2) as the reductant. The protein is Flavin-dependent thymidylate synthase of Thermotoga neapolitana (strain ATCC 49049 / DSM 4359 / NBRC 107923 / NS-E).